Here is a 1272-residue protein sequence, read N- to C-terminus: uncharacterized protein (1272 aa).

3 coiled-coil regions span residues 185 to 212 (IEFLDEIEKAELKKRRKEGNLTIEEAVN), 246 to 274 (KNSAEEKEKKLRLSKKKEQLEKIQEYLDA), and 607 to 640 (ALGKDLEKLIKLVNDHDQEIQKIYKEVEKLNTVI). The segment at 1179–1231 (ELPETSQQPVVPTPPATRPSSPIPPESDILTEEEQLEEQPPRQQQATRKTTTT) is disordered. Pro residues predominate over residues 1189–1203 (VPTPPATRPSSPIPP). The span at 1219 to 1231 (PRQQQATRKTTTT) shows a compositional bias: low complexity.

This is an uncharacterized protein from Magallana gigas (Pacific oyster).